We begin with the raw amino-acid sequence, 338 residues long: MSTLRLLISDSYDPWFNLAVEECIFRQMPATQRVLFLWRNADTVVIGRAQNPWKECNTRRMEEDNVRLARRSSGGGAVFHDLGNTCFTFMAGKPEYDKTISTSIVLNALNALGVSAEASGRNDLVVKTAEGDRKVSGSAYRETKDRGFHHGTLLLNADLSRLANYLNPDKKKLAAKGITSVRSRVTNLTELLPGITHEQVCEAITKAFFAHYGERVEAEIISPDKTPDLPNFAEIFARQSSWEWNFGQAPAFSHLLDERFSWGGVELHFDVEKGHITRAQVFTDSLNPAPLEALAGRLQGCLYRADMLQQECEALLVDFPDQEKELRELSTWIAGAVR.

Residues 29 to 216 (PATQRVLFLW…AFFAHYGERV (188 aa)) form the BPL/LPL catalytic domain. Residues Arg-71, 76–79 (GAVF), and Lys-134 each bind ATP. Lys-134 provides a ligand contact to (R)-lipoate.

Belongs to the LplA family. In terms of assembly, monomer.

The protein resides in the cytoplasm. It carries out the reaction L-lysyl-[lipoyl-carrier protein] + (R)-lipoate + ATP = N(6)-[(R)-lipoyl]-L-lysyl-[lipoyl-carrier protein] + AMP + diphosphate + H(+). The protein operates within protein modification; protein lipoylation via exogenous pathway; protein N(6)-(lipoyl)lysine from lipoate: step 1/2. It functions in the pathway protein modification; protein lipoylation via exogenous pathway; protein N(6)-(lipoyl)lysine from lipoate: step 2/2. Catalyzes both the ATP-dependent activation of exogenously supplied lipoate to lipoyl-AMP and the transfer of the activated lipoyl onto the lipoyl domains of lipoate-dependent enzymes. The protein is Lipoate-protein ligase A of Shigella boydii serotype 18 (strain CDC 3083-94 / BS512).